The chain runs to 402 residues: Candidapepsin-1 (402 aa).

Positions 1-25 (MVAIVTLTRQVLLTIALALFAQGAA) form a signal peptide, or 18, or 21. Positions 26–62 (IPEEAAKRDDNPGFVALDFDVLRKPLNLTEALLREKR) are cleaved as a propeptide — activation peptide. The N-linked (GlcNAc...) asparagine glycan is linked to Asn52. The Peptidase A1 domain maps to 76 to 389 (YASKVSVGSN…NLDANTISIA (314 aa)). Asp94 is an active-site residue. Cys109 and Cys115 form a disulfide bridge. Asp282 is a catalytic residue. A disulfide bridge connects residues Cys320 and Cys354.

This sequence belongs to the peptidase A1 family. In terms of processing, O-glycosylated.

It is found in the secreted. It catalyses the reaction Preferential cleavage at the carboxyl of hydrophobic amino acids, but fails to cleave 15-Leu-|-Tyr-16, 16-Tyr-|-Leu-17 and 24-Phe-|-Phe-25 of insulin B chain. Activates trypsinogen, and degrades keratin.. The protein is Candidapepsin-1 (SAPP1) of Candida parapsilosis (Yeast).